The following is a 467-amino-acid chain: GTPase Der (467 aa).

2 consecutive EngA-type G domains span residues 25 to 188 (PVVA…PEAP) and 199 to 372 (RRVA…ASWE). GTP-binding positions include 31–38 (GRPNVGKS), 78–82 (DTGGW), 140–143 (NKAD), 205–212 (GRPNVGKS), 252–256 (DTAGL), and 317–320 (NKWD). One can recognise a KH-like domain in the interval 373–455 (TRVPTAQLNA…PIEIAVRPRK (83 aa)).

Belongs to the TRAFAC class TrmE-Era-EngA-EngB-Septin-like GTPase superfamily. EngA (Der) GTPase family. Associates with the 50S ribosomal subunit.

GTPase that plays an essential role in the late steps of ribosome biogenesis. This chain is GTPase Der, found in Salinispora arenicola (strain CNS-205).